The sequence spans 342 residues: Galactose mutarotase (342 aa).

At serine 14 the chain carries Phosphoserine. Beta-D-galactose contacts are provided by residues 81–82 (NR) and histidine 107. Serine 124 carries the phosphoserine modification. Histidine 176 acts as the Proton donor in catalysis. Beta-D-galactose is bound by residues 176 to 178 (HSY), aspartate 243, glutamine 279, and glutamate 307. The active-site Proton acceptor is the glutamate 307.

Belongs to the aldose epimerase family. In terms of assembly, monomer.

It is found in the cytoplasm. It carries out the reaction alpha-D-galactose = beta-D-galactose. It catalyses the reaction alpha-D-glucose = beta-D-glucose. Its pathway is carbohydrate metabolism; hexose metabolism. It functions in the pathway carbohydrate metabolism; galactose metabolism. Mutarotase that catalyzes the interconversion of beta-D-galactose and alpha-D-galactose during galactose metabolism. Beta-D-galactose is metabolized in the liver into glucose 1-phosphate, the primary metabolic fuel, by the action of four enzymes that constitute the Leloir pathway: GALM, GALK1 (galactokinase), GALT (galactose-1-phosphate uridylyltransferase) and GALE (UDP-galactose-4'-epimerase). Involved in the maintenance of the equilibrium between the beta- and alpha-anomers of galactose, therefore ensuring a sufficient supply of the alpha-anomer for GALK1. Also active on D-glucose although shows a preference for galactose over glucose. The polypeptide is Galactose mutarotase (GALM) (Sus scrofa (Pig)).